A 370-amino-acid polypeptide reads, in one-letter code: A-type ATP synthase subunit C (370 aa).

It belongs to the V-ATPase V0D/AC39 subunit family. As to quaternary structure, has multiple subunits with at least A(3), B(3), C, D, E, F, H, I and proteolipid K(x).

Its subcellular location is the cell membrane. Component of the A-type ATP synthase that produces ATP from ADP in the presence of a proton gradient across the membrane. In Pyrococcus furiosus (strain ATCC 43587 / DSM 3638 / JCM 8422 / Vc1), this protein is A-type ATP synthase subunit C.